Consider the following 274-residue polypeptide: Regulator of G-protein signaling rgs-11 (274 aa).

In terms of domain architecture, RGS spans 137–256 (SPGLLAASKY…LEDPLYLDLL (120 aa)).

This is Regulator of G-protein signaling rgs-11 (rgs-11) from Caenorhabditis elegans.